Reading from the N-terminus, the 425-residue chain is CinA-like protein (425 aa).

It belongs to the CinA family.

The polypeptide is CinA-like protein (Shewanella sp. (strain MR-4)).